The primary structure comprises 400 residues: NADPH dehydrogenase 2 (400 aa).

FMN is bound by residues Thr-38 and Gln-115. Substrate-binding residues include His-192 and Asn-195. Catalysis depends on Tyr-197, which acts as the Proton donor. FMN is bound by residues Arg-244 and Arg-349. Ser-353 is subject to Phosphoserine. Tyr-376 is a binding site for substrate. Ser-379 carries the phosphoserine modification.

It belongs to the NADH:flavin oxidoreductase/NADH oxidase family. Homodimer or heterodimer with OYE3. Requires FMN as cofactor.

The protein localises to the cytoplasm. It localises to the nucleus. It is found in the mitochondrion. It carries out the reaction A + NADPH + H(+) = AH2 + NADP(+). In terms of biological role, flavin-dependent enoate reductase that catalyzes the chemo- and stereoslective hydrogenation of electron-poor alkenes. The enzyme is reduced by NADPH, and oxygen, quinones, and alpha,beta-unsaturated aldehydes and ketones can act as electron acceptors to complete catalytic turnover. The physiological oxidant remains elusive. Has an antioxidant activity, reducing reactive oxygen species (ROS) levels when overexpressed. Formation of OYE2-OYE3 heterodimers contribute to the induction of programmed cell death upon oxidative stress. This Saccharomyces cerevisiae (strain ATCC 204508 / S288c) (Baker's yeast) protein is NADPH dehydrogenase 2.